The chain runs to 129 residues: Small ribosomal subunit protein uS11c (129 aa).

It belongs to the universal ribosomal protein uS11 family. In terms of assembly, part of the 30S ribosomal subunit.

The protein localises to the plastid. Its subcellular location is the chloroplast. This is Small ribosomal subunit protein uS11c from Oltmannsiellopsis viridis (Marine flagellate).